The chain runs to 644 residues: Exoribonuclease 2 (644 aa).

In terms of domain architecture, RNB spans 189–516; the sequence is REDLTALDFV…NHRLLKAVIK (328 aa). One can recognise an S1 motif domain in the interval 561-643; that stretch reads DTRFAAEIVD…ETRSIIARPV (83 aa).

Belongs to the RNR ribonuclease family. RNase II subfamily.

It localises to the cytoplasm. It carries out the reaction Exonucleolytic cleavage in the 3'- to 5'-direction to yield nucleoside 5'-phosphates.. In terms of biological role, involved in mRNA degradation. Hydrolyzes single-stranded polyribonucleotides processively in the 3' to 5' direction. The chain is Exoribonuclease 2 from Shigella boydii serotype 18 (strain CDC 3083-94 / BS512).